The sequence spans 1323 residues: PAS domain-containing serine/threonine-protein kinase (1323 aa).

N-acetylmethionine is present on Met-1. Ser-19 carries the post-translational modification Phosphoserine. The tract at residues 20–47 is disordered; that stretch reads LPLPVSAEGPAAQTTAEPSRSFSSAHRH. The span at 31–43 shows a compositional bias: polar residues; that stretch reads AQTTAEPSRSFSS. Thr-34 carries the post-translational modification Phosphothreonine. 2 PAS domains span residues 119-190 and 335-402; these read SSPL…MEAD and YRAS…SLQL. Residue Ser-582 is modified to Phosphoserine. A disordered region spans residues 837–857; the sequence is AASDRESPGHVPSTLDAGPED. Ser-939 is subject to Phosphoserine. One can recognise a Protein kinase domain in the interval 999-1251; the sequence is YSTMSPLGSG…LEKLVTDPWV (253 aa). Residues 1005–1013, Lys-1028, and 1082–1089 contribute to the ATP site; these read LGSGAFGFV and EKHGSGLD. Asp-1128 serves as the catalytic Proton acceptor. Residue Asp-1146 coordinates ATP. A phosphothreonine; by autocatalysis mark is found at Thr-1161 and Thr-1165. Residues 1298–1323 are disordered; that stretch reads CGGPVPGEAPNGQGCLHPGDPRLLTS.

The protein belongs to the protein kinase superfamily. CAMK Ser/Thr protein kinase family. Autophosphorylated on Thr-1161 and Thr-1165. Autophosphorylation is activated by phospholipids. As to expression, ubiquitously expressed, with slightly higher expression in brain, prostate and testis. Reduced expression was found in placenta. Present in germ cells of testis and in the midpiece of sperm tails (at protein level).

The protein resides in the cytoplasm. The protein localises to the nucleus. The catalysed reaction is L-seryl-[protein] + ATP = O-phospho-L-seryl-[protein] + ADP + H(+). It carries out the reaction L-threonyl-[protein] + ATP = O-phospho-L-threonyl-[protein] + ADP + H(+). With respect to regulation, protein kinase activity is inhibited by the first PAS domain: binding of an unidentified ligand desinhibits the protein kinase activity. May be activated by autophosphorylation on Thr-1161 and Thr-1165. The activating role of autophosphorylation at Thr-1161 is unclear: according to a report, autophosphorylation at Thr-1161 does not play a major role in activation. Autophosphorylation is enhanced upon phosphatidylinositol monophosphate (phosphatidylinositol 4-phosphate) binding and inhibited upon phosphatidylinositol bi- and tri-phosphate binding. In contrast, phosphorylation of target proteins is inhibited upon all phosphatidylinositol-binding (phosphatidylinositol mono- bi- and tri-phosphate). In terms of biological role, serine/threonine-protein kinase involved in energy homeostasis and protein translation. Phosphorylates EEF1A1, GYS1, PDX1 and RPS6. Probably plays a role under changing environmental conditions (oxygen, glucose, nutrition), rather than under standard conditions. Acts as a sensor involved in energy homeostasis: regulates glycogen synthase synthesis by mediating phosphorylation of GYS1, leading to GYS1 inactivation. May be involved in glucose-stimulated insulin production in pancreas and regulation of glucagon secretion by glucose in alpha cells; however such data require additional evidences. May play a role in regulation of protein translation by phosphorylating EEF1A1, leading to increase translation efficiency. May also participate in respiratory regulation. The protein is PAS domain-containing serine/threonine-protein kinase (PASK) of Homo sapiens (Human).